The sequence spans 190 residues: Shikimate kinase (190 aa).

14-19 (GAGKST) contributes to the ATP binding site. S18 serves as a coordination point for Mg(2+). Residues D36, R60, and G82 each contribute to the substrate site. R120 is an ATP binding site. R139 serves as a coordination point for substrate.

Belongs to the shikimate kinase family. As to quaternary structure, monomer. It depends on Mg(2+) as a cofactor.

It is found in the cytoplasm. It carries out the reaction shikimate + ATP = 3-phosphoshikimate + ADP + H(+). The protein operates within metabolic intermediate biosynthesis; chorismate biosynthesis; chorismate from D-erythrose 4-phosphate and phosphoenolpyruvate: step 5/7. Its function is as follows. Catalyzes the specific phosphorylation of the 3-hydroxyl group of shikimic acid using ATP as a cosubstrate. In Thioalkalivibrio sulfidiphilus (strain HL-EbGR7), this protein is Shikimate kinase.